The primary structure comprises 483 residues: Aspartyl/glutamyl-tRNA(Asn/Gln) amidotransferase subunit B (483 aa).

This sequence belongs to the GatB/GatE family. GatB subfamily. As to quaternary structure, heterotrimer of A, B and C subunits.

It catalyses the reaction L-glutamyl-tRNA(Gln) + L-glutamine + ATP + H2O = L-glutaminyl-tRNA(Gln) + L-glutamate + ADP + phosphate + H(+). The enzyme catalyses L-aspartyl-tRNA(Asn) + L-glutamine + ATP + H2O = L-asparaginyl-tRNA(Asn) + L-glutamate + ADP + phosphate + 2 H(+). Its function is as follows. Allows the formation of correctly charged Asn-tRNA(Asn) or Gln-tRNA(Gln) through the transamidation of misacylated Asp-tRNA(Asn) or Glu-tRNA(Gln) in organisms which lack either or both of asparaginyl-tRNA or glutaminyl-tRNA synthetases. The reaction takes place in the presence of glutamine and ATP through an activated phospho-Asp-tRNA(Asn) or phospho-Glu-tRNA(Gln). This is Aspartyl/glutamyl-tRNA(Asn/Gln) amidotransferase subunit B from Marinobacter nauticus (strain ATCC 700491 / DSM 11845 / VT8) (Marinobacter aquaeolei).